The chain runs to 156 residues: SsrA-binding protein (156 aa).

It belongs to the SmpB family.

It localises to the cytoplasm. Its function is as follows. Required for rescue of stalled ribosomes mediated by trans-translation. Binds to transfer-messenger RNA (tmRNA), required for stable association of tmRNA with ribosomes. tmRNA and SmpB together mimic tRNA shape, replacing the anticodon stem-loop with SmpB. tmRNA is encoded by the ssrA gene; the 2 termini fold to resemble tRNA(Ala) and it encodes a 'tag peptide', a short internal open reading frame. During trans-translation Ala-aminoacylated tmRNA acts like a tRNA, entering the A-site of stalled ribosomes, displacing the stalled mRNA. The ribosome then switches to translate the ORF on the tmRNA; the nascent peptide is terminated with the 'tag peptide' encoded by the tmRNA and targeted for degradation. The ribosome is freed to recommence translation, which seems to be the essential function of trans-translation. The chain is SsrA-binding protein from Clostridium perfringens (strain 13 / Type A).